A 249-amino-acid chain; its full sequence is Acetylglutamate kinase (249 aa).

Substrate contacts are provided by residues 38–39 (GG), arginine 60, and asparagine 147.

It belongs to the acetylglutamate kinase family. ArgB subfamily.

It localises to the cytoplasm. The catalysed reaction is N-acetyl-L-glutamate + ATP = N-acetyl-L-glutamyl 5-phosphate + ADP. It functions in the pathway amino-acid biosynthesis; L-arginine biosynthesis; N(2)-acetyl-L-ornithine from L-glutamate: step 2/4. Its function is as follows. Catalyzes the ATP-dependent phosphorylation of N-acetyl-L-glutamate. This Deinococcus geothermalis (strain DSM 11300 / CIP 105573 / AG-3a) protein is Acetylglutamate kinase.